The chain runs to 73 residues: Putative defensin-like protein 42 (73 aa).

Intrachain disulfides connect C6-C58, C18-C41, C27-C50, and C31-C52.

The protein belongs to the DEFL family.

This Arabidopsis thaliana (Mouse-ear cress) protein is Putative defensin-like protein 42.